The primary structure comprises 252 residues: Nuclease C1 (252 aa).

His-87 acts as the Proton acceptor in catalysis. Asn-119 is a binding site for Mg(2+).

The protein belongs to the DNA/RNA non-specific endonuclease family. It depends on Mg(2+) as a cofactor. The cofactor is Mn(2+).

The protein resides in the secreted. Its function is as follows. This enzyme has both RNase and DNase activity. This chain is Nuclease C1 (NUC1CE), found in Cunninghamella echinulata var. echinulata.